The chain runs to 363 residues: Ribosome-binding ATPase YchF (363 aa).

Residues 3–256 (FKCGIVGLPN…LEDEEKVDFL (254 aa)) enclose the OBG-type G domain. 12–17 (NVGKST) contributes to the ATP binding site. Positions 16 and 36 each coordinate Mg(2+). A TGS domain is found at 278–361 (NLQTYFTAGV…QDGDVMHFRF (84 aa)).

It belongs to the TRAFAC class OBG-HflX-like GTPase superfamily. OBG GTPase family. YchF/OLA1 subfamily. Mg(2+) is required as a cofactor.

In terms of biological role, ATPase that binds to both the 70S ribosome and the 50S ribosomal subunit in a nucleotide-independent manner. The protein is Ribosome-binding ATPase YchF of Haemophilus ducreyi (strain 35000HP / ATCC 700724).